A 122-amino-acid chain; its full sequence is MAYDKQALIDQLGQLTIMELADLIDGLKETWGVTAAVAVSGGGAGAASPAAEEKTEFDVVLIDAGASKINVIKEIRGITGLGLKEAKDMSEKGGVLKEGVAKDEAEKMKAQLEAAGARVELK.

The protein belongs to the bacterial ribosomal protein bL12 family. Homodimer. Part of the ribosomal stalk of the 50S ribosomal subunit. Forms a multimeric L10(L12)X complex, where L10 forms an elongated spine to which 2 to 4 L12 dimers bind in a sequential fashion. Binds GTP-bound translation factors.

Forms part of the ribosomal stalk which helps the ribosome interact with GTP-bound translation factors. Is thus essential for accurate translation. The sequence is that of Large ribosomal subunit protein bL12 from Deinococcus radiodurans (strain ATCC 13939 / DSM 20539 / JCM 16871 / CCUG 27074 / LMG 4051 / NBRC 15346 / NCIMB 9279 / VKM B-1422 / R1).